The sequence spans 266 residues: Probable catechol O-methyltransferase 1 (266 aa).

Positions 56, 78, 86, 106, 107, 135, and 162 each coordinate S-adenosyl-L-methionine. Asp-162 provides a ligand contact to Mg(2+). Lys-165 serves as a coordination point for substrate. Mg(2+) is bound by residues Asp-190 and Asn-191. Asn-191 is a substrate binding site.

Belongs to the class I-like SAM-binding methyltransferase superfamily. Cation-dependent O-methyltransferase family. It depends on Mg(2+) as a cofactor.

It localises to the cytoplasm. It is found in the nucleus. The catalysed reaction is a catechol + S-adenosyl-L-methionine = a guaiacol + S-adenosyl-L-homocysteine + H(+). This chain is Probable catechol O-methyltransferase 1, found in Schizosaccharomyces pombe (strain 972 / ATCC 24843) (Fission yeast).